The primary structure comprises 416 residues: Enterobactin exporter EntS (416 aa).

Residues 1–21 (MNKQSWLLNLSLLKTHPAFRA) lie on the Cytoplasmic side of the membrane. Residues 22–42 (VFLARFISIVSLGLLGVAVPV) traverse the membrane as a helical segment. Residues 43 to 55 (QIQMMTHSTWQVG) lie on the Periplasmic side of the membrane. The helical transmembrane segment at 56 to 76 (LSVTLTGGAMFVGLMVGGVLA) threads the bilayer. Topologically, residues 77–83 (DRYERKK) are cytoplasmic. Residues 84–104 (VILLARGTCGIGFIGLCLNAL) traverse the membrane as a helical segment. Residues 105–109 (LPEPS) lie on the Periplasmic side of the membrane. The chain crosses the membrane as a helical span at residues 110 to 130 (LLAIYLLGLWDGFFASLGVTA). The Cytoplasmic segment spans residues 131-156 (LLAATPALVGRENLMQAGAITMLTVR). Residues 157–177 (LGSVISPMIGGLLLATGGVAW) form a helical membrane-spanning segment. Position 178 (Asn-178) is a topological domain, periplasmic. A helical transmembrane segment spans residues 179–199 (YGLAAAGTFITLLPLLSLPAL). The Cytoplasmic segment spans residues 200–218 (PPPPQPREHPLKSLLAGFR). The helical transmembrane segment at 219–239 (FLLASPLVGGIALLGGLLTMA) threads the bilayer. Topologically, residues 240–256 (SAVRVLYPALADNWQMS) are periplasmic. A helical transmembrane segment spans residues 257–277 (AAQIGFLYAAIPLGAAIGALT). The Cytoplasmic segment spans residues 278–287 (SGKLAHSVRP). Residues 288-307 (GLLMLLSTLGAFLAISLFGL) form a helical membrane-spanning segment. The Periplasmic portion of the chain corresponds to 308–313 (MPMWIL). Residues 314–336 (GVVCLALFGWLSAVSSLLQYTML) form a helical membrane-spanning segment. Over 337-356 (QTQTPEAMLGRINGLWTAQN) the chain is Cytoplasmic. The chain crosses the membrane as a helical span at residues 357 to 377 (VTGDAIGAALLGGLGAMMTPV). Ala-378 is a topological domain (periplasmic). A helical transmembrane segment spans residues 379-399 (SASASGFGLLIIGVLLLLVLV). Residues 400–416 (ELRRFRQTPPQVTASDS) lie on the Cytoplasmic side of the membrane.

Belongs to the major facilitator superfamily. EntS (TC 2.A.1.38) family.

The protein localises to the cell inner membrane. Its function is as follows. Component of an export pathway for enterobactin. This chain is Enterobactin exporter EntS, found in Escherichia coli O45:K1 (strain S88 / ExPEC).